The sequence spans 270 residues: tRNA pseudouridine synthase A (270 aa).

The active-site Nucleophile is the Asp60. The tract at residues 107-111 is RNA binding; sequence FHARF. Position 118 (Tyr118) interacts with substrate. The interaction with tRNA stretch occupies residues 168 to 172; it reads QCQSR.

Belongs to the tRNA pseudouridine synthase TruA family. In terms of assembly, homodimer.

The catalysed reaction is uridine(38/39/40) in tRNA = pseudouridine(38/39/40) in tRNA. In terms of biological role, formation of pseudouridine at positions 38, 39 and 40 in the anticodon stem and loop of transfer RNAs. This is tRNA pseudouridine synthase A from Escherichia coli O139:H28 (strain E24377A / ETEC).